Consider the following 318-residue polypeptide: Sucrose operon repressor (318 aa).

The HTH lacI-type domain occupies 1 to 56 (MIKLEDVANKAGVSVTTVSRVINRKGYLSDATISKVEKAMQDLHYIPNAAARSLQG). The H-T-H motif DNA-binding region spans 4–23 (LEDVANKAGVSVTTVSRVIN).

Its function is as follows. This protein may control the expression of the genes that are involved in the transport and catabolism of sucrose. The polypeptide is Sucrose operon repressor (sacR) (Lactococcus lactis subsp. lactis (Streptococcus lactis)).